A 514-amino-acid polypeptide reads, in one-letter code: Bifunctional purine biosynthesis protein PurH (514 aa).

The MGS-like domain occupies 1-145; that stretch reads MIKRALISVS…KNYQDVVVIV (145 aa).

Belongs to the PurH family.

It catalyses the reaction (6R)-10-formyltetrahydrofolate + 5-amino-1-(5-phospho-beta-D-ribosyl)imidazole-4-carboxamide = 5-formamido-1-(5-phospho-D-ribosyl)imidazole-4-carboxamide + (6S)-5,6,7,8-tetrahydrofolate. The enzyme catalyses IMP + H2O = 5-formamido-1-(5-phospho-D-ribosyl)imidazole-4-carboxamide. Its pathway is purine metabolism; IMP biosynthesis via de novo pathway; 5-formamido-1-(5-phospho-D-ribosyl)imidazole-4-carboxamide from 5-amino-1-(5-phospho-D-ribosyl)imidazole-4-carboxamide (10-formyl THF route): step 1/1. It participates in purine metabolism; IMP biosynthesis via de novo pathway; IMP from 5-formamido-1-(5-phospho-D-ribosyl)imidazole-4-carboxamide: step 1/1. The protein is Bifunctional purine biosynthesis protein PurH of Acetivibrio thermocellus (strain ATCC 27405 / DSM 1237 / JCM 9322 / NBRC 103400 / NCIMB 10682 / NRRL B-4536 / VPI 7372) (Clostridium thermocellum).